The chain runs to 277 residues: Ribosomal RNA small subunit methyltransferase A (277 aa).

S-adenosyl-L-methionine is bound by residues asparagine 27, leucine 29, glycine 54, glutamate 75, aspartate 95, and asparagine 118.

Belongs to the class I-like SAM-binding methyltransferase superfamily. rRNA adenine N(6)-methyltransferase family. RsmA subfamily.

The protein localises to the cytoplasm. It carries out the reaction adenosine(1518)/adenosine(1519) in 16S rRNA + 4 S-adenosyl-L-methionine = N(6)-dimethyladenosine(1518)/N(6)-dimethyladenosine(1519) in 16S rRNA + 4 S-adenosyl-L-homocysteine + 4 H(+). Specifically dimethylates two adjacent adenosines (A1518 and A1519) in the loop of a conserved hairpin near the 3'-end of 16S rRNA in the 30S particle. May play a critical role in biogenesis of 30S subunits. This is Ribosomal RNA small subunit methyltransferase A from Chlamydia trachomatis serovar L2 (strain ATCC VR-902B / DSM 19102 / 434/Bu).